A 435-amino-acid chain; its full sequence is MNKHHTLTKQKRKAGLLSIIPGLGQIANQQLSKGLLFLAITGLFAFELCVFGIQALTGLMTLGSVPGEDHSLFMLIEGTLQLIVTMIFLMFYIFNIHDSRKTAAMKAAGLEVNTTAKDMICHAGDKGFPYLFTLPAYIMMVFVIIFPVLVTLFVALTNYDFYHIPPNRLIDWVGFKNFLNIFFLGSYRETFVNVLGWTVIWTICATTLQIILGIVTALFVNQDFIKGKRIFRMIFLFPWAVPAFITIMSFSNMFNDSIGAVNAQVIPLFNHLPFVELPAIAWKTDPFWTKTALIMIQTWLGFPYIYVMVTGVLQAIPGELYEAAKIDGATFIQRFRHITFPMILFATAPVMITQYTFNFNNFSIIYLFNEGGPGSAGAGAGSTDILISWIYKLTTGTSPQYSVAAAVTLLISFIVIGISLIAFKKSNAFGNEEVM.

The next 8 helical transmembrane spans lie at 35 to 55 (LLFL…GIQA), 73 to 93 (FMLI…MFYI), 136 to 156 (AYIM…FVAL), 199 to 219 (VIWT…TALF), 234 to 254 (IFLF…SNMF), 293 to 313 (LIMI…TGVL), 337 to 357 (HITF…QYTF), and 403 to 423 (VAAA…LIAF). The ABC transmembrane type-1 domain occupies 195-422 (LGWTVIWTIC…FIVIGISLIA (228 aa)).

This sequence belongs to the binding-protein-dependent transport system permease family. MalFG subfamily. The complex is composed of two ATP-binding proteins (MsmX), two transmembrane proteins (MdxF and MdxG) and a solute-binding protein (MdxE).

It localises to the cell membrane. Functionally, part of the ABC transporter complex involved in maltodextrin import. Probably responsible for the translocation of the substrate across the membrane. The sequence is that of Maltodextrin transport system permease protein MdxF (mdxF) from Bacillus subtilis (strain 168).